The primary structure comprises 93 residues: Integration host factor subunit beta (93 aa).

This sequence belongs to the bacterial histone-like protein family. In terms of assembly, heterodimer of an alpha and a beta chain.

Functionally, this protein is one of the two subunits of integration host factor, a specific DNA-binding protein that functions in genetic recombination as well as in transcriptional and translational control. This is Integration host factor subunit beta from Rhodospirillum centenum (strain ATCC 51521 / SW).